The sequence spans 304 residues: Probable alpha-L-glutamate ligase 2 (304 aa).

Positions His107–Val290 constitute an ATP-grasp domain. ATP contacts are provided by residues Lys144, Glu181 to Phe182, Asp190, and Arg214 to Asn216. Residues Asp251, Glu263, and Asn265 each contribute to the Mg(2+) site. 3 residues coordinate Mn(2+): Asp251, Glu263, and Asn265.

Belongs to the RimK family. Mg(2+) serves as cofactor. Mn(2+) is required as a cofactor.

In Hahella chejuensis (strain KCTC 2396), this protein is Probable alpha-L-glutamate ligase 2.